A 353-amino-acid polypeptide reads, in one-letter code: Delta-aminolevulinic acid dehydratase (353 aa).

K221 serves as the catalytic Schiff-base intermediate with substrate. 5-aminolevulinate is bound by residues R231 and K244. Position 260 (E260) interacts with Mg(2+). K275 acts as the Schiff-base intermediate with substrate in catalysis. Positions 301 and 340 each coordinate 5-aminolevulinate.

The protein belongs to the ALAD family. In terms of assembly, homooctamer. Requires Mg(2+) as cofactor.

It carries out the reaction 2 5-aminolevulinate = porphobilinogen + 2 H2O + H(+). Its pathway is porphyrin-containing compound metabolism; protoporphyrin-IX biosynthesis; coproporphyrinogen-III from 5-aminolevulinate: step 1/4. Catalyzes an early step in the biosynthesis of tetrapyrroles. Binds two molecules of 5-aminolevulinate per subunit, each at a distinct site, and catalyzes their condensation to form porphobilinogen. Required for nodule development. This chain is Delta-aminolevulinic acid dehydratase (hemB), found in Bradyrhizobium diazoefficiens (strain JCM 10833 / BCRC 13528 / IAM 13628 / NBRC 14792 / USDA 110).